Here is a 420-residue protein sequence, read N- to C-terminus: D-inositol 3-phosphate glycosyltransferase (420 aa).

A 1D-myo-inositol 3-phosphate-binding site is contributed by His-13. Residues 19–20 (QP) and Gly-27 each bind UDP-N-acetyl-alpha-D-glucosamine. 1D-myo-inositol 3-phosphate is bound by residues 24 to 29 (DAGGMN), Lys-82, Tyr-115, Thr-139, and Arg-159. The UDP-N-acetyl-alpha-D-glucosamine site is built by Arg-233, Lys-238, and Val-294. Mg(2+) is bound by residues Phe-303, Arg-304, and Ala-306. 2 residues coordinate UDP-N-acetyl-alpha-D-glucosamine: Glu-316 and Glu-324. Residue Thr-330 coordinates Mg(2+).

It belongs to the glycosyltransferase group 1 family. MshA subfamily. As to quaternary structure, homodimer.

It catalyses the reaction 1D-myo-inositol 3-phosphate + UDP-N-acetyl-alpha-D-glucosamine = 1D-myo-inositol 2-acetamido-2-deoxy-alpha-D-glucopyranoside 3-phosphate + UDP + H(+). In terms of biological role, catalyzes the transfer of a N-acetyl-glucosamine moiety to 1D-myo-inositol 3-phosphate to produce 1D-myo-inositol 2-acetamido-2-deoxy-glucopyranoside 3-phosphate in the mycothiol biosynthesis pathway. The sequence is that of D-inositol 3-phosphate glycosyltransferase from Pseudarthrobacter chlorophenolicus (strain ATCC 700700 / DSM 12829 / CIP 107037 / JCM 12360 / KCTC 9906 / NCIMB 13794 / A6) (Arthrobacter chlorophenolicus).